The following is a 470-amino-acid chain: UDP-N-acetylmuramoylalanine--D-glutamate ligase (470 aa).

124–130 (GTNGKTT) is an ATP binding site.

The protein belongs to the MurCDEF family.

The protein localises to the cytoplasm. It catalyses the reaction UDP-N-acetyl-alpha-D-muramoyl-L-alanine + D-glutamate + ATP = UDP-N-acetyl-alpha-D-muramoyl-L-alanyl-D-glutamate + ADP + phosphate + H(+). It functions in the pathway cell wall biogenesis; peptidoglycan biosynthesis. Its function is as follows. Cell wall formation. Catalyzes the addition of glutamate to the nucleotide precursor UDP-N-acetylmuramoyl-L-alanine (UMA). This Prochlorococcus marinus (strain SARG / CCMP1375 / SS120) protein is UDP-N-acetylmuramoylalanine--D-glutamate ligase.